A 616-amino-acid polypeptide reads, in one-letter code: Leucine aminopeptidase (616 aa).

Substrate-binding positions include 128–130 and 282–286; these read QCQ and GGMEN. A Zn(2+)-binding site is contributed by His-309. Glu-310 serves as the catalytic Proton acceptor. Residues His-313 and Glu-332 each coordinate Zn(2+). Tyr-397 functions as the Proton donor in the catalytic mechanism. Substrate is bound at residue 566–568; it reads RMK.

The protein belongs to the peptidase M1 family. It depends on Zn(2+) as a cofactor.

Its subcellular location is the cytoplasm. The enzyme catalyses an epoxide + H2O = an ethanediol. In terms of biological role, aminopeptidase that preferentially cleaves di- and tripeptides. Also has low epoxide hydrolase activity (in vitro). Can hydrolyze the epoxide leukotriene LTA(4) but it forms preferentially 5,6-dihydroxy-7,9,11,14-eicosatetraenoic acid rather than the cytokine leukotriene B(4) as the product compared to the homologous mammalian enzyme (in vitro). In Arabidopsis thaliana (Mouse-ear cress), this protein is Leucine aminopeptidase (LKHA4).